The following is a 490-amino-acid chain: Serine/threonine-protein kinase BSK6 (490 aa).

Gly2 carries N-myristoyl glycine lipidation. Ser25 bears the Phosphoserine mark. The Protein kinase domain occupies Asp56–Leu310. ATP contacts are provided by residues His62–Val70 and Lys84. Asp178 acts as the Proton acceptor in catalysis. Ser373 carries the phosphoserine modification.

This sequence belongs to the protein kinase superfamily. Ser/Thr protein kinase family. Interacts with BRI1, ASK7/BIN2, ASK9/BIL2, BSK1, BSK5, BSK8 and BSK11. In terms of processing, phosphorylated by BRI1, ASK7/BIN2 and ASK9/BIL2.

It is found in the cell membrane. The enzyme catalyses L-seryl-[protein] + ATP = O-phospho-L-seryl-[protein] + ADP + H(+). It carries out the reaction L-threonyl-[protein] + ATP = O-phospho-L-threonyl-[protein] + ADP + H(+). Probable serine/threonine kinase that acts as a positive regulator of brassinosteroid (BR) signaling downstream of the receptor kinase BRI1. Functions redundantly with BSK3, BSK4, BSK7 and BSK8. In Arabidopsis thaliana (Mouse-ear cress), this protein is Serine/threonine-protein kinase BSK6.